Here is a 701-residue protein sequence, read N- to C-terminus: DNA ligase (701 aa).

Residues 43–47 (DAAYD), 92–93 (SL), and E126 each bind NAD(+). The active-site N6-AMP-lysine intermediate is K128. R149, E186, K302, and K326 together coordinate NAD(+). Zn(2+) is bound by residues C420, C423, C444, and C450. Residues 623-701 (ANDSPVAGKT…EDEWFDLIGA (79 aa)) enclose the BRCT domain.

The protein belongs to the NAD-dependent DNA ligase family. LigA subfamily. It depends on Mg(2+) as a cofactor. The cofactor is Mn(2+).

It carries out the reaction NAD(+) + (deoxyribonucleotide)n-3'-hydroxyl + 5'-phospho-(deoxyribonucleotide)m = (deoxyribonucleotide)n+m + AMP + beta-nicotinamide D-nucleotide.. Functionally, DNA ligase that catalyzes the formation of phosphodiester linkages between 5'-phosphoryl and 3'-hydroxyl groups in double-stranded DNA using NAD as a coenzyme and as the energy source for the reaction. It is essential for DNA replication and repair of damaged DNA. The chain is DNA ligase from Maricaulis maris (strain MCS10) (Caulobacter maris).